A 78-amino-acid chain; its full sequence is NAD(P)H-quinone oxidoreductase subunit L (78 aa).

2 consecutive transmembrane segments (helical) span residues 10 to 30 (LFVIGTYLFLGTLYLVFIPLG) and 48 to 68 (LLIYSLVFLFFPGLILFAPFL).

It belongs to the complex I NdhL subunit family. NDH-1 can be composed of about 15 different subunits; different subcomplexes with different compositions have been identified which probably have different functions.

The protein localises to the cellular thylakoid membrane. It carries out the reaction a plastoquinone + NADH + (n+1) H(+)(in) = a plastoquinol + NAD(+) + n H(+)(out). It catalyses the reaction a plastoquinone + NADPH + (n+1) H(+)(in) = a plastoquinol + NADP(+) + n H(+)(out). Functionally, NDH-1 shuttles electrons from an unknown electron donor, via FMN and iron-sulfur (Fe-S) centers, to quinones in the respiratory and/or the photosynthetic chain. The immediate electron acceptor for the enzyme in this species is believed to be plastoquinone. Couples the redox reaction to proton translocation, and thus conserves the redox energy in a proton gradient. Cyanobacterial NDH-1 also plays a role in inorganic carbon-concentration. This is NAD(P)H-quinone oxidoreductase subunit L from Prochlorococcus marinus (strain SARG / CCMP1375 / SS120).